Here is a 273-residue protein sequence, read N- to C-terminus: Type II pantothenate kinase (273 aa).

Aspartate 8–lysine 15 provides a ligand contact to ATP. The active-site Proton acceptor is the glutamate 76. ATP is bound by residues threonine 105, glycine 127 to methionine 131, phenylalanine 143, and serine 230.

This sequence belongs to the type II pantothenate kinase family. In terms of assembly, homodimer.

The protein resides in the cytoplasm. The enzyme catalyses (R)-pantothenate + ATP = (R)-4'-phosphopantothenate + ADP + H(+). Its pathway is cofactor biosynthesis; coenzyme A biosynthesis; CoA from (R)-pantothenate: step 1/5. Catalyzes the phosphorylation of pantothenate (Pan), the first step in CoA biosynthesis. In Bacillus cereus (strain G9842), this protein is Type II pantothenate kinase.